Here is a 252-residue protein sequence, read N- to C-terminus: 2-succinyl-6-hydroxy-2,4-cyclohexadiene-1-carboxylate synthase (252 aa).

The protein belongs to the AB hydrolase superfamily. MenH family. As to quaternary structure, monomer.

The enzyme catalyses 5-enolpyruvoyl-6-hydroxy-2-succinyl-cyclohex-3-ene-1-carboxylate = (1R,6R)-6-hydroxy-2-succinyl-cyclohexa-2,4-diene-1-carboxylate + pyruvate. It participates in quinol/quinone metabolism; 1,4-dihydroxy-2-naphthoate biosynthesis; 1,4-dihydroxy-2-naphthoate from chorismate: step 3/7. Its pathway is quinol/quinone metabolism; menaquinone biosynthesis. Catalyzes a proton abstraction reaction that results in 2,5-elimination of pyruvate from 2-succinyl-5-enolpyruvyl-6-hydroxy-3-cyclohexene-1-carboxylate (SEPHCHC) and the formation of 2-succinyl-6-hydroxy-2,4-cyclohexadiene-1-carboxylate (SHCHC). This is 2-succinyl-6-hydroxy-2,4-cyclohexadiene-1-carboxylate synthase from Salmonella agona (strain SL483).